Reading from the N-terminus, the 317-residue chain is Glutaminase (317 aa).

Substrate is bound by residues Ser-67, Asn-118, Glu-162, Asn-169, Tyr-193, Tyr-245, and Val-263.

The protein belongs to the glutaminase family. In terms of assembly, homotetramer.

The enzyme catalyses L-glutamine + H2O = L-glutamate + NH4(+). This Brucella abortus (strain S19) protein is Glutaminase.